The chain runs to 88 residues: Cell division topological specificity factor (88 aa).

The protein belongs to the MinE family.

Functionally, prevents the cell division inhibition by proteins MinC and MinD at internal division sites while permitting inhibition at polar sites. This ensures cell division at the proper site by restricting the formation of a division septum at the midpoint of the long axis of the cell. This chain is Cell division topological specificity factor, found in Herminiimonas arsenicoxydans.